Consider the following 937-residue polypeptide: Beta-mannosidase A (937 aa).

The first 23 residues, 1 to 23 (MRALPTTATTLLGVLFFPSASRS), serve as a signal peptide directing secretion. 7 N-linked (GlcNAc...) asparagine glycosylation sites follow: Asn42, Asn82, Asn250, Asn285, Asn319, Asn329, and Asn350. Residue Glu482 is the Proton donor of the active site. Asn553, Asn612, Asn743, and Asn796 each carry an N-linked (GlcNAc...) asparagine glycan.

The protein belongs to the glycosyl hydrolase 2 family. Beta-mannosidase A subfamily. As to quaternary structure, homodimer. N-glycosylated.

The protein localises to the secreted. The enzyme catalyses Hydrolysis of terminal, non-reducing beta-D-mannose residues in beta-D-mannosides.. It functions in the pathway glycan metabolism; N-glycan degradation. Exoglycosidase that cleaves the single beta-linked mannose residue from the non-reducing end of beta-mannosidic oligosaccharides of various complexity and length. Involved in the degradation of polymeric mannan and galactomannan. Releases the terminal mannose residue from mannotriose and is somewaht less active on other mannooligosaccharides. This is Beta-mannosidase A (mndA) from Aspergillus aculeatus.